The primary structure comprises 160 residues: Ribosomal RNA large subunit methyltransferase H (160 aa).

S-adenosyl-L-methionine contacts are provided by residues Leu76, Gly108, and 127–132 (LGKMTW).

It belongs to the RNA methyltransferase RlmH family. As to quaternary structure, homodimer.

The protein localises to the cytoplasm. It catalyses the reaction pseudouridine(1915) in 23S rRNA + S-adenosyl-L-methionine = N(3)-methylpseudouridine(1915) in 23S rRNA + S-adenosyl-L-homocysteine + H(+). Its function is as follows. Specifically methylates the pseudouridine at position 1915 (m3Psi1915) in 23S rRNA. This chain is Ribosomal RNA large subunit methyltransferase H, found in Rhizobium johnstonii (strain DSM 114642 / LMG 32736 / 3841) (Rhizobium leguminosarum bv. viciae).